The primary structure comprises 666 residues: DNA-directed RNA polymerase subunit beta' (666 aa).

Zn(2+) is bound by residues cysteine 69, cysteine 71, cysteine 87, and cysteine 90. Residues aspartate 489, aspartate 491, and aspartate 493 each coordinate Mg(2+).

The protein belongs to the RNA polymerase beta' chain family. RpoC1 subfamily. In plastids the minimal PEP RNA polymerase catalytic core is composed of four subunits: alpha, beta, beta', and beta''. When a (nuclear-encoded) sigma factor is associated with the core the holoenzyme is formed, which can initiate transcription. The cofactor is Mg(2+). Zn(2+) is required as a cofactor.

Its subcellular location is the plastid. It localises to the chloroplast. The enzyme catalyses RNA(n) + a ribonucleoside 5'-triphosphate = RNA(n+1) + diphosphate. Its function is as follows. DNA-dependent RNA polymerase catalyzes the transcription of DNA into RNA using the four ribonucleoside triphosphates as substrates. This chain is DNA-directed RNA polymerase subunit beta', found in Chara vulgaris (Common stonewort).